Consider the following 330-residue polypeptide: Lipoyl synthase (330 aa).

Residues Cys-77, Cys-82, Cys-88, Cys-103, Cys-107, Cys-110, and Ser-317 each coordinate [4Fe-4S] cluster. The region spanning 89–306 (FNHGTATFMI…RSEAERMGFE (218 aa)) is the Radical SAM core domain.

The protein belongs to the radical SAM superfamily. Lipoyl synthase family. [4Fe-4S] cluster serves as cofactor.

It localises to the cytoplasm. It catalyses the reaction [[Fe-S] cluster scaffold protein carrying a second [4Fe-4S](2+) cluster] + N(6)-octanoyl-L-lysyl-[protein] + 2 oxidized [2Fe-2S]-[ferredoxin] + 2 S-adenosyl-L-methionine + 4 H(+) = [[Fe-S] cluster scaffold protein] + N(6)-[(R)-dihydrolipoyl]-L-lysyl-[protein] + 4 Fe(3+) + 2 hydrogen sulfide + 2 5'-deoxyadenosine + 2 L-methionine + 2 reduced [2Fe-2S]-[ferredoxin]. It participates in protein modification; protein lipoylation via endogenous pathway; protein N(6)-(lipoyl)lysine from octanoyl-[acyl-carrier-protein]: step 2/2. Its function is as follows. Catalyzes the radical-mediated insertion of two sulfur atoms into the C-6 and C-8 positions of the octanoyl moiety bound to the lipoyl domains of lipoate-dependent enzymes, thereby converting the octanoylated domains into lipoylated derivatives. The protein is Lipoyl synthase of Actinobacillus pleuropneumoniae serotype 5b (strain L20).